A 110-amino-acid chain; its full sequence is Large ribosomal subunit protein P2B (110 aa).

Serine 29 bears the Phosphoserine mark. Lysine 49 participates in a covalent cross-link: Glycyl lysine isopeptide (Lys-Gly) (interchain with G-Cter in ubiquitin). The disordered stretch occupies residues 66-110 (VPTGGASSAAAGAAGAAAGGDAAEEEKEEEAKEESDDDMGFGLFD). Over residues 69 to 86 (GGASSAAAGAAGAAAGGD) the composition is skewed to low complexity. Residues 87-104 (AAEEEKEEEAKEESDDDM) are compositionally biased toward acidic residues. Serine 100 is subject to Phosphoserine.

Belongs to the eukaryotic ribosomal protein P1/P2 family. In terms of assembly, component of the large ribosomal subunit (LSU). Mature yeast ribosomes consist of a small (40S) and a large (60S) subunit. The 40S small subunit contains 1 molecule of ribosomal RNA (18S rRNA) and 33 different proteins (encoded by 57 genes). The large 60S subunit contains 3 rRNA molecules (25S, 5.8S and 5S rRNA) and 46 different proteins (encoded by 81 genes). The 5 acidic ribosomal P-proteins form the stalk structure of the 60S subunit. They are organized as a pentameric complex in which uL10/P0 interacts with 2 heterodimers, P1A-P2B and P1B-P2A. Post-translationally, the N-terminus is not modified.

The protein localises to the cytoplasm. Its function is as follows. Component of the ribosome, a large ribonucleoprotein complex responsible for the synthesis of proteins in the cell. The small ribosomal subunit (SSU) binds messenger RNAs (mRNAs) and translates the encoded message by selecting cognate aminoacyl-transfer RNA (tRNA) molecules. The large subunit (LSU) contains the ribosomal catalytic site termed the peptidyl transferase center (PTC), which catalyzes the formation of peptide bonds, thereby polymerizing the amino acids delivered by tRNAs into a polypeptide chain. The nascent polypeptides leave the ribosome through a tunnel in the LSU and interact with protein factors that function in enzymatic processing, targeting, and the membrane insertion of nascent chains at the exit of the ribosomal tunnel. This is Large ribosomal subunit protein P2B from Saccharomyces cerevisiae (strain ATCC 204508 / S288c) (Baker's yeast).